We begin with the raw amino-acid sequence, 317 residues long: MQKTSFLNKIDPLLKLWFWLISLVVAFLPLGLYGLVIINLVFLTLVVISEKRVKSALIILSWMLFFLWFNVIVNGFIFLPNTALSVDQNHNFLGSFIYSGGNNFGGVSWWSFNLRSFLRSFVIALRISMLFSASFLLTTSSSIYELAWAVERFFKFLKLFHIKVQPISILLAVIFKLLPTVKSEIIRIKQAQATRGFIYNKCSFLNPFKIKTLFIPVLLSTVKKTETTAFALQAKGYDLNNTNRTHYPLKYNLLNGVFLLVGLLLFSILLIANNWNLVYWENPNYSFNFDKQNFIFLRAINSNNLLYFWQIELIAIG.

The next 7 membrane-spanning stretches (helical) occupy residues 18–38, 58–78, 92–112, 130–150, 159–179, 202–222, and 252–272; these read FWLI…LVII, IILS…GFIF, FLGS…WWSF, LFSA…AWAV, LFHI…KLLP, CSFL…LSTV, and NLLN…LLIA.

It belongs to the CbiQ family.

It localises to the cell membrane. This is an uncharacterized protein from Mycoplasma genitalium (strain ATCC 33530 / DSM 19775 / NCTC 10195 / G37) (Mycoplasmoides genitalium).